A 468-amino-acid chain; its full sequence is IQ domain-containing protein C (468 aa).

One can recognise an IQ domain in the interval 6 to 35 (LVLKVTALQACIRGFLVRRQFQSLRGEYEA). Disordered regions lie at residues 113-157 (NASS…GPGL), 202-245 (EVNQ…PGEP), and 329-468 (SHKE…GPAG). Residues 139-150 (QETRDVSRKNDP) are compositionally biased toward basic and acidic residues. The span at 415–426 (SSIERSPSESSH) shows a compositional bias: basic and acidic residues.

This Bos taurus (Bovine) protein is IQ domain-containing protein C (IQCC).